The following is a 498-amino-acid chain: ATP synthase subunit beta, chloroplastic (498 aa).

172–179 (GGAGVGKT) lines the ATP pocket.

This sequence belongs to the ATPase alpha/beta chains family. In terms of assembly, F-type ATPases have 2 components, CF(1) - the catalytic core - and CF(0) - the membrane proton channel. CF(1) has five subunits: alpha(3), beta(3), gamma(1), delta(1), epsilon(1). CF(0) has four main subunits: a(1), b(1), b'(1) and c(9-12).

It localises to the plastid. It is found in the chloroplast thylakoid membrane. It catalyses the reaction ATP + H2O + 4 H(+)(in) = ADP + phosphate + 5 H(+)(out). Produces ATP from ADP in the presence of a proton gradient across the membrane. The catalytic sites are hosted primarily by the beta subunits. The chain is ATP synthase subunit beta, chloroplastic from Spinacia oleracea (Spinach).